Reading from the N-terminus, the 255-residue chain is MNINKIALIYNHNSKHLAIIEEIKQLYNYCKIEEAEVIIVIGGDGELLHNIHRYMHLNIPFYGVNLGSLGFLMNPLDTKKLLQNIHESTVSILNPLLMQVEDTSGQIYTALAINEVSIFRKTNQAAKFRIEVNGIERMSELVADGALVATPAGSSAYNLSASGPILPLESNMLCLTPICSFRPRRWHGALLLSSATIKFEILNTNKRPVNATADFQEFNNITNVTVKSTKDKPVKLLFNKNHTLEDRIIKEQFGG.

Asp44 functions as the Proton acceptor in the catalytic mechanism. NAD(+) is bound by residues 44-45 (DG), His49, 114-115 (NE), Asp144, Ala152, 155-160 (SAYNLS), and Gln216.

It belongs to the NAD kinase family. A divalent metal cation serves as cofactor.

Its subcellular location is the cytoplasm. The catalysed reaction is NAD(+) + ATP = ADP + NADP(+) + H(+). In terms of biological role, involved in the regulation of the intracellular balance of NAD and NADP, and is a key enzyme in the biosynthesis of NADP. Catalyzes specifically the phosphorylation on 2'-hydroxyl of the adenosine moiety of NAD to yield NADP. The polypeptide is NAD kinase (Rickettsia africae (strain ESF-5)).